A 190-amino-acid chain; its full sequence is DNA-binding transcriptional repressor TetR (190 aa).

The HTH tetR-type domain occupies 6-66; it reads ETRSAALLAV…AALDAHDASF (61 aa). A DNA-binding region (H-T-H motif) is located at residues 29–48; sequence SMDSVAALAHASKTTIYRRW.

In terms of assembly, homodimer.

Binds to its own palindromic promoter and represses transcription of its operon; addition of tetracycline or doxycycline (but not tigecycline) interferes with DNA binding. Addition of TetX to the DNA-TetR-antibiotic complex restores DNA binding. The protein is DNA-binding transcriptional repressor TetR of Mycobacteroides abscessus (strain ATCC 19977 / DSM 44196 / CCUG 20993 / CIP 104536 / JCM 13569 / NCTC 13031 / TMC 1543 / L948) (Mycobacterium abscessus).